Here is a 168-residue protein sequence, read N- to C-terminus: INO80 complex subunit 3 (168 aa).

Polar residues predominate over residues 115-129 (TNSTLSTPKSFHSPL). Residues 115-168 (TNSTLSTPKSFHSPLQSRGISPSSAQSSAAVSSSRKQKRKRTSEGPSERRARKK) form a disordered region. Residues 130–148 (QSRGISPSSAQSSAAVSSS) are compositionally biased toward low complexity. Residues 156 to 168 (TSEGPSERRARKK) are compositionally biased toward basic and acidic residues.

In terms of assembly, component of the INO80 chromatin remodeling complex.

The protein resides in the nucleus. Functionally, component of the INO80 complex which remodels chromatin by shifting nucleosomes and is involved in DNA repair. The chain is INO80 complex subunit 3 (iec3) from Schizosaccharomyces pombe (strain 972 / ATCC 24843) (Fission yeast).